Consider the following 213-residue polypeptide: tRNA (guanine-N(7)-)-methyltransferase (213 aa).

S-adenosyl-L-methionine is bound by residues D44, E69, N96, and D119. D119 is a catalytic residue. Substrate contacts are provided by K123 and D155.

The protein belongs to the class I-like SAM-binding methyltransferase superfamily. TrmB family.

It catalyses the reaction guanosine(46) in tRNA + S-adenosyl-L-methionine = N(7)-methylguanosine(46) in tRNA + S-adenosyl-L-homocysteine. The protein operates within tRNA modification; N(7)-methylguanine-tRNA biosynthesis. Catalyzes the formation of N(7)-methylguanine at position 46 (m7G46) in tRNA. The sequence is that of tRNA (guanine-N(7)-)-methyltransferase from Thermosynechococcus vestitus (strain NIES-2133 / IAM M-273 / BP-1).